The chain runs to 423 residues: Alpha-1-antichymotrypsin (423 aa).

The N-terminal stretch at 1–23 (MERMLPLLALGLLAAGFCPAVLC) is a signal peptide. Asn-33, Asn-93, Asn-106, Asn-127, and Asn-186 each carry an N-linked (GlcNAc...) asparagine glycan. Residues 235–237 (KKK) mediate DNA binding. The N-linked (GlcNAc...) asparagine glycan is linked to Asn-271. Residues 369-394 (GTEASAATAVKITLLSALVETRTIVR) form an RCL region. An O-glycosylated at one site region spans residues 381 to 389 (TLLSALVET).

It belongs to the serpin family. Interacts with DNAJC1. In terms of processing, N- and O-glycosylated. As to expression, plasma. Synthesized in the liver. Like the related alpha-1-antitrypsin, its concentration increases in the acute phase of inflammation or infection. Found in the amyloid plaques from the hippocampus of Alzheimer disease brains.

It is found in the secreted. Functionally, although its physiological function is unclear, it can inhibit neutrophil cathepsin G and mast cell chymase, both of which can convert angiotensin-1 to the active angiotensin-2. This chain is Alpha-1-antichymotrypsin (SERPINA3), found in Homo sapiens (Human).